The primary structure comprises 991 residues: Nonsense-mediated mRNA decay factor SMG8 (991 aa).

Disordered regions lie at residues 16–41, 82–127, and 279–299; these read AWMG…PEPP, HQDP…EGNR, and PPRN…PKRR. The segment covering 95–110 has biased composition (low complexity); that stretch reads EAGAVGEAGGAEDPGA. Serine 115 is subject to Phosphoserine. The span at 279–289 shows a compositional bias: basic and acidic residues; that stretch reads PPRNQDPAHPD. A compositionally biased stretch (basic residues) spans 290-299; sequence KPKKHSPKRR. Residues serine 469 and serine 668 each carry the phosphoserine modification. Positions 653–722 are disordered; it reads FEPSTPDPAP…PQAGGDNPEV (70 aa). The segment covering 675 to 684 has biased composition (basic and acidic residues); that stretch reads DADKLKEKEP. Residues 685–706 are compositionally biased toward polar residues; the sequence is QTQGESTSLSLALSLGQSTDSL. Phosphoserine is present on residues serine 742 and serine 895. At arginine 898 the chain carries Omega-N-methylarginine.

Belongs to the SMG8 family. Component of the SMG1C complex composed of SMG1, SMG8 and SMG9; the recruitment of SMG8 to SMG1 N-terminus induces a large conformational change in the SMG1 C-terminal head domain containing the catalytic domain. Forms heterodimers with SMG9; this assembly form may represent a SMG1C intermediate form. Post-translationally, phosphorylated by SMG1.

Involved in nonsense-mediated decay (NMD) of mRNAs containing premature stop codons. Is recruited by release factors to stalled ribosomes together with SMG1 and SMG9 (forming the SMG1C protein kinase complex) and, in the SMG1C complex, is required to mediate the recruitment of SMG1 to the ribosome:SURF complex and to suppress SMG1 kinase activity until the ribosome:SURF complex locates the exon junction complex (EJC). Acts as a regulator of kinase activity. The chain is Nonsense-mediated mRNA decay factor SMG8 (SMG8) from Homo sapiens (Human).